A 461-amino-acid polypeptide reads, in one-letter code: ATP synthase subunit beta (461 aa).

151-158 (GGAGVGKT) contributes to the ATP binding site.

It belongs to the ATPase alpha/beta chains family. F-type ATPases have 2 components, CF(1) - the catalytic core - and CF(0) - the membrane proton channel. CF(1) has five subunits: alpha(3), beta(3), gamma(1), delta(1), epsilon(1). CF(0) has three main subunits: a(1), b(2) and c(9-12). The alpha and beta chains form an alternating ring which encloses part of the gamma chain. CF(1) is attached to CF(0) by a central stalk formed by the gamma and epsilon chains, while a peripheral stalk is formed by the delta and b chains.

It is found in the cell inner membrane. The catalysed reaction is ATP + H2O + 4 H(+)(in) = ADP + phosphate + 5 H(+)(out). Its function is as follows. Produces ATP from ADP in the presence of a proton gradient across the membrane. The catalytic sites are hosted primarily by the beta subunits. The polypeptide is ATP synthase subunit beta (Idiomarina loihiensis (strain ATCC BAA-735 / DSM 15497 / L2-TR)).